Consider the following 580-residue polypeptide: Arginine--tRNA ligase (580 aa).

Positions 123–133 match the 'HIGH' region motif; it reads PNIAKEMHVGH.

It belongs to the class-I aminoacyl-tRNA synthetase family. Monomer.

It localises to the cytoplasm. It catalyses the reaction tRNA(Arg) + L-arginine + ATP = L-arginyl-tRNA(Arg) + AMP + diphosphate. The sequence is that of Arginine--tRNA ligase (argS) from Buchnera aphidicola subsp. Schizaphis graminum (strain Sg).